Here is a 330-residue protein sequence, read N- to C-terminus: Putative [LysW]-L-2-aminoadipate/[LysW]-L-glutamate phosphate reductase (330 aa).

Residues 10 to 13 (SGYI) and 34 to 36 (SRR) each bind NADP(+). Cys-142 is an active-site residue. Asn-297 is a binding site for NADP(+).

This sequence belongs to the NAGSA dehydrogenase family. Type 1 subfamily. LysY sub-subfamily.

It is found in the cytoplasm. It carries out the reaction [amino-group carrier protein]-C-terminal-N-(1-carboxy-5-oxopentan-1-yl)-L-glutamine + phosphate + NADP(+) = [amino-group carrier protein]-C-terminal-N-(1-carboxy-5-phosphooxy-5-oxopentan-1-yl)-L-glutamine + NADPH + H(+). The catalysed reaction is [amino-group carrier protein]-C-terminal-gamma-(L-glutamyl-5-semialdehyde)-L-glutamate + phosphate + NADP(+) = [amino-group carrier protein]-C-terminal-gamma-(5-phospho-L-glutamyl)-L-glutamate + NADPH + H(+). It functions in the pathway amino-acid biosynthesis; L-lysine biosynthesis via AAA pathway; L-lysine from L-alpha-aminoadipate (Thermus route): step 3/5. The protein operates within amino-acid biosynthesis; L-arginine biosynthesis. Functionally, involved in both the arginine and lysine biosynthetic pathways. The polypeptide is Putative [LysW]-L-2-aminoadipate/[LysW]-L-glutamate phosphate reductase (Thermococcus kodakarensis (strain ATCC BAA-918 / JCM 12380 / KOD1) (Pyrococcus kodakaraensis (strain KOD1))).